The primary structure comprises 135 residues: Probable histone H2A.2 (135 aa).

The protein belongs to the histone H2A family. The nucleosome is a histone octamer containing two molecules each of H2A, H2B, H3 and H4 assembled in one H3-H4 heterotetramer and two H2A-H2B heterodimers. The octamer wraps approximately 147 bp of DNA.

It is found in the nucleus. It localises to the chromosome. Core component of nucleosome. Nucleosomes wrap and compact DNA into chromatin, limiting DNA accessibility to the cellular machineries which require DNA as a template. Histones thereby play a central role in transcription regulation, DNA repair, DNA replication and chromosomal stability. DNA accessibility is regulated via a complex set of post-translational modifications of histones, also called histone code, and nucleosome remodeling. This is Probable histone H2A.2 from Oryza sativa subsp. indica (Rice).